The sequence spans 1103 residues: Voltage-dependent calcium channel subunit alpha-2/delta-1 (1103 aa).

The N-terminal stretch at 1–24 (MAAGCLLALTLTLFQSLLIGPSSE) is a signal peptide. At 25-1073 (EPFPSAVTIK…VLEDYTDCGG (1049 aa)) the chain is on the extracellular side. Residue Asn-92 is glycosylated (N-linked (GlcNAc...) asparagine). Ser-119 is modified (phosphoserine). N-linked (GlcNAc...) asparagine glycosylation is found at Asn-136 and Asn-184. The region spanning 253–430 (DMLILVDVSG…INTQEYLDVL (178 aa)) is the VWFA domain. Residues Asp-259, Ser-261, and Ser-263 each coordinate a divalent metal cation. Positions 259–263 (DVSGS) match the MIDAS-like motif motif. 13 N-linked (GlcNAc...) asparagine glycosylation sites follow: Asn-324, Asn-348, Asn-468, Asn-475, Asn-604, Asn-613, Asn-675, Asn-781, Asn-824, Asn-888, Asn-895, Asn-985, and Asn-998. Cys-404 and Cys-1059 are oxidised to a cystine. Positions 446-556 (WTNVYLDALE…NIQNPKSQEP (111 aa)) constitute a Cache domain. A helical transmembrane segment spans residues 1074-1094 (VSGLNPSLWYIIGIQFLLLWL). Residues 1095 to 1103 (VSGSTHRLL) lie on the Cytoplasmic side of the membrane.

The protein belongs to the calcium channel subunit alpha-2/delta family. As to quaternary structure, dimer formed of alpha-2-1 and delta-1 chains; disulfide-linked. Voltage-dependent calcium channels are multisubunit complexes, consisting of alpha-1 (CACNA1), alpha-2 (CACNA2D), beta (CACNB) and delta (CACNA2D) subunits in a 1:1:1:1 ratio. Post-translationally, proteolytically processed into subunits alpha-2-1 and delta-1 that are disulfide-linked. In terms of tissue distribution, isoform 1 is expressed in skeletal muscle. Isoform 2 is expressed in the central nervous system. Isoform 2, isoform 4 and isoform 5 are expressed in neuroblastoma cells. Isoform 3, isoform 4 and isoform 5 are expressed in the aorta.

Its subcellular location is the membrane. It localises to the cell membrane. Functionally, the alpha-2/delta subunit of voltage-dependent calcium channels regulates calcium current density and activation/inactivation kinetics of the calcium channel. Plays an important role in excitation-contraction coupling. This Homo sapiens (Human) protein is Voltage-dependent calcium channel subunit alpha-2/delta-1 (CACNA2D1).